The sequence spans 344 residues: Cell cycle control protein 50C (344 aa).

The Cytoplasmic segment spans residues 1-34; sequence MEETPQHCLSRLPDNSALKQQELPAHRLYFTARR. The helical transmembrane segment at 35 to 55 threads the bilayer; that stretch reads VLFVFFTTGIFCLCMGIILIL. Residues 56 to 306 lie on the Extracellular side of the membrane; that stretch reads SARSTQEIEI…STLTWCGGNS (251 aa). 2 N-linked (GlcNAc...) asparagine glycosylation sites follow: N66 and N261. A helical membrane pass occupies residues 307–327; the sequence is LFLGLAYTVTGAITWLASFTM. The Cytoplasmic segment spans residues 328–344; that stretch reads MAIHITLKNKQMSFFHQ.

The protein belongs to the CDC50/LEM3 family. Specifically expressed in testis.

The protein localises to the membrane. The sequence is that of Cell cycle control protein 50C (TMEM30C) from Macaca fascicularis (Crab-eating macaque).